A 332-amino-acid polypeptide reads, in one-letter code: Ketol-acid reductoisomerase (NADP(+)) (332 aa).

The region spanning 3-183 (TEIFYDADAD…GGARAGVIKT (181 aa)) is the KARI N-terminal Rossmann domain. Residues 26-29 (YGSQ), serine 52, serine 54, and 84-87 (DTKQ) contribute to the NADP(+) site. Histidine 109 is a catalytic residue. Residue glycine 135 participates in NADP(+) binding. The KARI C-terminal knotted domain maps to 184 to 329 (TFTEETETDL…KKLRSLMSWT (146 aa)). Mg(2+) is bound by residues aspartate 192, glutamate 196, glutamate 228, and glutamate 232. Serine 253 provides a ligand contact to substrate.

The protein belongs to the ketol-acid reductoisomerase family. It depends on Mg(2+) as a cofactor.

It carries out the reaction (2R)-2,3-dihydroxy-3-methylbutanoate + NADP(+) = (2S)-2-acetolactate + NADPH + H(+). It catalyses the reaction (2R,3R)-2,3-dihydroxy-3-methylpentanoate + NADP(+) = (S)-2-ethyl-2-hydroxy-3-oxobutanoate + NADPH + H(+). It functions in the pathway amino-acid biosynthesis; L-isoleucine biosynthesis; L-isoleucine from 2-oxobutanoate: step 2/4. The protein operates within amino-acid biosynthesis; L-valine biosynthesis; L-valine from pyruvate: step 2/4. In terms of biological role, involved in the biosynthesis of branched-chain amino acids (BCAA). Catalyzes an alkyl-migration followed by a ketol-acid reduction of (S)-2-acetolactate (S2AL) to yield (R)-2,3-dihydroxy-isovalerate. In the isomerase reaction, S2AL is rearranged via a Mg-dependent methyl migration to produce 3-hydroxy-3-methyl-2-ketobutyrate (HMKB). In the reductase reaction, this 2-ketoacid undergoes a metal-dependent reduction by NADPH to yield (R)-2,3-dihydroxy-isovalerate. In Saccharopolyspora erythraea (strain ATCC 11635 / DSM 40517 / JCM 4748 / NBRC 13426 / NCIMB 8594 / NRRL 2338), this protein is Ketol-acid reductoisomerase (NADP(+)).